A 200-amino-acid chain; its full sequence is Formate dehydrogenase iron-sulfur subunit (200 aa).

4Fe-4S ferredoxin-type domains lie at 7-37, 50-81, and 82-111; these read VKFY…VGVN, GKEK…VRAD, and GIVL…FPKS. Residues C16, C19, C22, C26, C59, C62, C67, C71, C91, C94, C97, C101, C123, C126, C155, and C159 each coordinate [4Fe-4S] cluster.

Formate dehydrogenase is a membrane-bound complex, formed of at least three different subunits. It depends on [4Fe-4S] cluster as a cofactor.

This chain is an electron transfer unit containing 18 cysteine residues, 16 of which occur in four clusters. This chain is Formate dehydrogenase iron-sulfur subunit (fdhB1), found in Wolinella succinogenes (strain ATCC 29543 / DSM 1740 / CCUG 13145 / JCM 31913 / LMG 7466 / NCTC 11488 / FDC 602W) (Vibrio succinogenes).